The sequence spans 263 residues: Small ribosomal subunit protein uS2 (263 aa).

This sequence belongs to the universal ribosomal protein uS2 family. Component of the small ribosomal subunit. Mature ribosomes consist of a small (40S) and a large (60S) subunit. The 40S subunit contains about 33 different proteins and 1 molecule of RNA (18S). The 60S subunit contains about 49 different proteins and 3 molecules of RNA (25S, 5.8S and 5S). Interacts with RPS21.

It is found in the cytoplasm. In terms of biological role, required for the assembly and/or stability of the 40S ribosomal subunit. Required for the processing of the 20S rRNA-precursor to mature 18S rRNA in a late step of the maturation of 40S ribosomal subunits. In Vairimorpha ceranae (strain BRL01) (Microsporidian parasite), this protein is Small ribosomal subunit protein uS2.